The sequence spans 474 residues: uncharacterized protein (474 aa).

Over residues 1–11 (MGGSDFEDDEL) the composition is skewed to acidic residues. A disordered region spans residues 1–163 (MGGSDFEDDE…ETSPFNREDG (163 aa)). The segment covering 12 to 25 (FKDLYGEENEKKVE) has biased composition (basic and acidic residues). The segment covering 27–39 (ASGNQETSNVTPT) has biased composition (polar residues). Positions 40–76 (KENEGYEELEKSGEAGAERTKENPFREEPGADFDRSG) are enriched in basic and acidic residues. The segment covering 129–140 (NDNYNENQSALT) has biased composition (polar residues). 2 consecutive RRM domains span residues 163–245 (GKMF…EQEK) and 247–324 (AKMF…RATP). Positions 412-474 (DPSKMNQGTG…GGHSFHPYRR (63 aa)) are disordered. The span at 425–434 (PFSPSMPSGS) shows a compositional bias: low complexity. A compositionally biased stretch (gly residues) spans 435–444 (SRGGYHGRNP).

The protein resides in the nucleus. This is an uncharacterized protein from Schizosaccharomyces pombe (strain 972 / ATCC 24843) (Fission yeast).